The sequence spans 20 residues: Toxin TpF21-Cocle (20 aa).

The LCN-type CS-alpha/beta domain occupies 1 to 20 (KDGYLVGNDGCKYSCNTYPK).

This sequence belongs to the long (4 C-C) scorpion toxin superfamily. Sodium channel inhibitor family. Beta subfamily. As to expression, expressed by the venom gland.

It is found in the secreted. In terms of biological role, beta toxins bind voltage-independently at site-4 of sodium channels (Nav) and shift the voltage of activation toward more negative potentials thereby affecting sodium channel activation and promoting spontaneous and repetitive firing. The polypeptide is Toxin TpF21-Cocle (Tityus pachyurus (Colombian scorpion)).